The sequence spans 94 residues: MARMVFCEYLKKEAEGLDFQLYPGELGKRIFNSISKQAWAEWIKKQTMLVNEKKLNMMNPEHRQLLEAEMVNFLFEGKDVHIDGYVPVQTNTKA.

Belongs to the Fe(2+)-trafficking protein family.

Functionally, could be a mediator in iron transactions between iron acquisition and iron-requiring processes, such as synthesis and/or repair of Fe-S clusters in biosynthetic enzymes. This Haemophilus ducreyi (strain 35000HP / ATCC 700724) protein is Probable Fe(2+)-trafficking protein.